We begin with the raw amino-acid sequence, 256 residues long: Small ribosomal subunit protein eS1 (256 aa).

A2 carries the N-acetylalanine; partial modification.

It belongs to the eukaryotic ribosomal protein eS1 family. In terms of assembly, component of the small ribosomal subunit. Mature ribosomes consist of a small (40S) and a large (60S) subunit. The 40S subunit contains about 33 different proteins and 1 molecule of RNA (18S). The 60S subunit contains about 49 different proteins and 3 molecules of RNA (25S, 5.8S and 5S).

The protein localises to the cytoplasm. The sequence is that of Small ribosomal subunit protein eS1 from Meyerozyma guilliermondii (strain ATCC 6260 / CBS 566 / DSM 6381 / JCM 1539 / NBRC 10279 / NRRL Y-324) (Yeast).